Here is a 279-residue protein sequence, read N- to C-terminus: Acyl-[acyl-carrier-protein]--UDP-N-acetylglucosamine O-acyltransferase (279 aa).

It belongs to the transferase hexapeptide repeat family. LpxA subfamily. In terms of assembly, homotrimer.

It is found in the cytoplasm. The catalysed reaction is a (3R)-hydroxyacyl-[ACP] + UDP-N-acetyl-alpha-D-glucosamine = a UDP-3-O-[(3R)-3-hydroxyacyl]-N-acetyl-alpha-D-glucosamine + holo-[ACP]. The protein operates within glycolipid biosynthesis; lipid IV(A) biosynthesis; lipid IV(A) from (3R)-3-hydroxytetradecanoyl-[acyl-carrier-protein] and UDP-N-acetyl-alpha-D-glucosamine: step 1/6. In terms of biological role, involved in the biosynthesis of lipid A, a phosphorylated glycolipid that anchors the lipopolysaccharide to the outer membrane of the cell. In Mesorhizobium japonicum (strain LMG 29417 / CECT 9101 / MAFF 303099) (Mesorhizobium loti (strain MAFF 303099)), this protein is Acyl-[acyl-carrier-protein]--UDP-N-acetylglucosamine O-acyltransferase.